Reading from the N-terminus, the 447-residue chain is MATHAALAVSRIPVTQRLQSKSAIHSFPAQCSSKRLEVAEFSGLRMSSIGGEASFFDAVAAQIIPKAVTTSTPVRGETVAKLKVAINGFGRIGRNFLRCWHGRKDSPLEVVVLNDSGGVKNASHLLKYDSMLGTFKAEVKIVDNETISVDGKLIKVVSNRDPLKLPWAELGIDIVIEGTGVFVDGPGAGKHIQAGASKVIITAPAKGADIPTYVMGVNEQDYGHDVANIISNASCTTNCLAPFAKVLDEEFGIVKGTMTTTHSYTGDQRLLDASHRDLRRARAAALNIVPTSTGAAKAVSLVLPQLKGKLNGIALRVPTPNVSVVDLVINVEKKGLTAEDVNEAFRKAANGPMKGILDVCDAPLVSVDFRCSDVSTTIDSSLTMVMGDDMVKVVAWYDNEWGYSQRVVDLAHLVASKWPGAEAVGSGDPLEDFCKTNPADEECKVYD.

The transit peptide at 1–80 (MATHAALAVS…STPVRGETVA (80 aa)) directs the protein to the chloroplast. Residues 91 to 92 (RI), D115, and R160 each bind NADP(+). D-glyceraldehyde 3-phosphate contacts are provided by residues 234–236 (SCT), T265, R280, 293–294 (TG), and R316. Residue C235 is the Nucleophile of the active site. Residue N399 participates in NADP(+) binding.

Belongs to the glyceraldehyde-3-phosphate dehydrogenase family. Tetramer of either four A chains (GAPDH 2) or two A and two B chains (GAPDH 1). In terms of tissue distribution, expressed in leaves and stems.

Its subcellular location is the plastid. It localises to the chloroplast membrane. The protein resides in the chloroplast stroma. The catalysed reaction is D-glyceraldehyde 3-phosphate + phosphate + NADP(+) = (2R)-3-phospho-glyceroyl phosphate + NADPH + H(+). It participates in carbohydrate biosynthesis; Calvin cycle. Functionally, involved in the photosynthetic reductive pentose phosphate pathway (Calvin-Benson cycle). Catalyzes the reduction of 1,3-diphosphoglycerate by NADPH. The polypeptide is Glyceraldehyde-3-phosphate dehydrogenase GAPB, chloroplastic (GAPB) (Arabidopsis thaliana (Mouse-ear cress)).